We begin with the raw amino-acid sequence, 126 residues long: Protein ApaG (126 aa).

The ApaG domain maps to 2–126 (SDPRYQIDVS…FRLAVPGALH (125 aa)).

This is Protein ApaG from Azotobacter vinelandii (strain DJ / ATCC BAA-1303).